Reading from the N-terminus, the 148-residue chain is uncharacterized protein (148 aa).

Residues 22–40 (YFLSLTVVISIIHLFTTCV) traverse the membrane as a helical segment. Residues 43 to 141 (HNHSTHFPYL…YYPISRHYLH (99 aa)) form a histidine-rich region.

Its subcellular location is the host membrane. This is an uncharacterized protein from African swine fever virus (strain Badajoz 1971 Vero-adapted) (Ba71V).